Reading from the N-terminus, the 298-residue chain is MSLKLDGKKLSLEIEKRLNDYISNNKIIAKRVPGLAVIRIGEDPASGVYVNNKEKACSRIGIKSFIFHLDESVEQKEVEQLIIKLNSDKDIDGMLLQLPIPKKFDEQKLISHINPSKDVDGLNEINIGKLVKNEPGMRSCTPAGIINLLRSQNITIEGKKIVVIGRSLLVGKPLSLMLLNLNGTVTMTHSKTLNLNKVCREADILIAAAGKPNLIDSSFVKEGAVIIDVGIHRLKSSDKNQTRLCGDVLLEDVISKVFAYTPVPGGVGPMTVTMLLVNTIFSWQKQFGLSSTLNDLLP.

NADP(+)-binding positions include 165 to 167 (GRS), S190, and I231.

This sequence belongs to the tetrahydrofolate dehydrogenase/cyclohydrolase family. As to quaternary structure, homodimer.

It catalyses the reaction (6R)-5,10-methylene-5,6,7,8-tetrahydrofolate + NADP(+) = (6R)-5,10-methenyltetrahydrofolate + NADPH. The catalysed reaction is (6R)-5,10-methenyltetrahydrofolate + H2O = (6R)-10-formyltetrahydrofolate + H(+). The protein operates within one-carbon metabolism; tetrahydrofolate interconversion. Catalyzes the oxidation of 5,10-methylenetetrahydrofolate to 5,10-methenyltetrahydrofolate and then the hydrolysis of 5,10-methenyltetrahydrofolate to 10-formyltetrahydrofolate. The polypeptide is Bifunctional protein FolD (Prochlorococcus marinus (strain AS9601)).